Here is a 283-residue protein sequence, read N- to C-terminus: Pre-protein-C8 (283 aa).

The segment at residues 1–40 (MKEDNNTSEESGRINRRNVLKTVGAAGLFAAGSTGMAAAA) is a signal peptide (tat-type signal). Residues 61–75 (ARELAKTPAFRELAQ) are helix-loop-helix (HLH) region.

As to quaternary structure, immunity protein HalI interacts with Halocin-C8; the interaction is direct. Predicted to be exported by the Tat system. The position of the signal peptide cleavage has not been experimentally proven.

Its subcellular location is the secreted. The protein resides in the cell membrane. Functionally, has antibacterial activity against a wide variety of haloarchaeons. Causes cell lysis and death, possibly by disrupting the cell wall. In terms of biological role, acts as an immunity protein for halocin-C8. Able to block the halocin-C8 activity by sequestering the activity of halocin-C8 through specific and direct binding. This is Pre-protein-C8 (proC8) from Halobacterium sp. (strain AS7092).